The following is a 133-amino-acid chain: Large ribosomal subunit protein uL22 (133 aa).

The protein belongs to the universal ribosomal protein uL22 family. In terms of assembly, part of the 50S ribosomal subunit.

Functionally, this protein binds specifically to 23S rRNA; its binding is stimulated by other ribosomal proteins, e.g. L4, L17, and L20. It is important during the early stages of 50S assembly. It makes multiple contacts with different domains of the 23S rRNA in the assembled 50S subunit and ribosome. Its function is as follows. The globular domain of the protein is located near the polypeptide exit tunnel on the outside of the subunit, while an extended beta-hairpin is found that lines the wall of the exit tunnel in the center of the 70S ribosome. This chain is Large ribosomal subunit protein uL22, found in Borrelia garinii subsp. bavariensis (strain ATCC BAA-2496 / DSM 23469 / PBi) (Borreliella bavariensis).